The chain runs to 650 residues: MENKFLSGSSELFSSLYNNTNTNSNNNNNNNNNNNNNNNINNTTTTTTTTTSNNNLKNNFSNKNNFSFNNSSNSLSSSFGVPSSPPPQKLNNSGYNFNSSSYSSLVPNIKKRSNSLDDNMSVPTLQNFTNNNNNNNNNNNNNNNNNSNNNSSNNNNNNNNNNNFNNSPTSSPTPYVPTTPLINSYPSSPFLINQQPLSSSTPFPFNHQPYHIHPFTTLSLNNSNGINNNNHNNNHNNSNNNNNNNSNSNSNNHNNHNNNNQSIVPQSIHLQSTTPQIQPLSLQPPQQLPTINGPTSTPPSSSNSTTTTTTTTTTPSTNENSNNNNNSYNTNNNNKPEIQLIDSGAILECFIELRDLGSSISKQSKESMVSGDFANGLERIKVTLSTLTNKIETLDLSIQNIIQNEPRSRIFGNSSDESRVPVLTRPRRFRKSKVKSKENNHHNNNNNNINNININNNNCSTPLLQSPQLSSSSPSLNSSHDGDQHLSSPQLSSSTPQHKSNGNGNTNSTNNNKRKIGELKQCTSCGTTSSPEWRKGPAGNQSLCNACGLYFAKLVRREASLTWKPQSVVSVNDLLCAGKDQKQSNTTSQLTTFINSVEHNQQIFQQQQQQQQQQQQQQQQQQQQQQQQQNHHHQQLQQQQQQQQQQQLHH.

Residues 16–79 are compositionally biased toward low complexity; it reads LYNNTNTNSN…NSSNSLSSSF (64 aa). 4 disordered regions span residues 16-96, 111-181, 221-335, and 409-515; these read LYNN…SGYN, KRSN…TTPL, NNSN…NNNK, and RIFG…NKRK. The segment covering 116 to 129 has biased composition (polar residues); the sequence is LDDNMSVPTLQNFT. 2 stretches are compositionally biased toward low complexity: residues 130-180 and 221-260; these read NNNN…PTTP and NNSNGINNNNHNNNHNNSNNNNNNNSNSNSNNHNNHNNNN. Positions 261-272 are enriched in polar residues; the sequence is QSIVPQSIHLQS. Residues 273 to 334 show a composition bias toward low complexity; it reads TTPQIQPLSL…NNSYNTNNNN (62 aa). Residues 425–434 are compositionally biased toward basic residues; it reads RPRRFRKSKV. Positions 442–511 are enriched in low complexity; the sequence is HNNNNNNINN…GNGNTNSTNN (70 aa). The GATA-type zinc-finger motif lies at 522–547; the sequence is CTSCGTTSSPEWRKGPAGNQSLCNAC. Residues 619–650 form a disordered region; that stretch reads QQQQQQQQQQQNHHHQQLQQQQQQQQQQQLHH.

Functionally, transcription factor that regulates morphogenetic cell movement during development. This chain is GATA zinc finger domain-containing protein 11 (gtaK), found in Dictyostelium discoideum (Social amoeba).